The sequence spans 150 residues: MNESIDINQIFTLLPHRYPFILVDRVIDYKVMEYLIAIKNVTINENFFTGHFPGNPIMPGVLMLEALAQASGILANLSRQPKEGYEFLHYFAGIDNARFKQVVIPGDQLRLEVRLVGQKRDFWRMHGEAYIGDKLACSADLLSATKEIKK.

The active site involves histidine 51.

The protein belongs to the thioester dehydratase family. FabZ subfamily.

It localises to the cytoplasm. It carries out the reaction a (3R)-hydroxyacyl-[ACP] = a (2E)-enoyl-[ACP] + H2O. Functionally, involved in unsaturated fatty acids biosynthesis. Catalyzes the dehydration of short chain beta-hydroxyacyl-ACPs and long chain saturated and unsaturated beta-hydroxyacyl-ACPs. In Legionella pneumophila (strain Lens), this protein is 3-hydroxyacyl-[acyl-carrier-protein] dehydratase FabZ.